Here is a 123-residue protein sequence, read N- to C-terminus: Small ribosomal subunit protein uS12 (123 aa).

Aspartate 89 is subject to 3-methylthioaspartic acid. The interval 103 to 123 (DTSGVQDRRQGRSKYGAKRPK) is disordered. Residues 113-123 (GRSKYGAKRPK) are compositionally biased toward basic residues.

Belongs to the universal ribosomal protein uS12 family. In terms of assembly, part of the 30S ribosomal subunit. Contacts proteins S8 and S17. May interact with IF1 in the 30S initiation complex.

Its function is as follows. With S4 and S5 plays an important role in translational accuracy. Functionally, interacts with and stabilizes bases of the 16S rRNA that are involved in tRNA selection in the A site and with the mRNA backbone. Located at the interface of the 30S and 50S subunits, it traverses the body of the 30S subunit contacting proteins on the other side and probably holding the rRNA structure together. The combined cluster of proteins S8, S12 and S17 appears to hold together the shoulder and platform of the 30S subunit. This Nitratidesulfovibrio vulgaris (strain ATCC 29579 / DSM 644 / CCUG 34227 / NCIMB 8303 / VKM B-1760 / Hildenborough) (Desulfovibrio vulgaris) protein is Small ribosomal subunit protein uS12.